Here is a 469-residue protein sequence, read N- to C-terminus: Acetyl-CoA decarbonylase/synthase complex subunit beta 1 (469 aa).

Residues C189, C192, C278, and C280 each contribute to the [Ni-Fe-S] cluster site.

This sequence belongs to the CdhC family. In terms of assembly, monomer. The ACDS complex is made up of alpha, epsilon, beta, gamma and delta chains with a probable stoichiometry of (alpha(2)epsilon(2))(4)-beta(8)-(gamma(1)delta(1))(8) (Potential). It depends on [Ni-Fe-S] cluster as a cofactor.

It carries out the reaction Co(I)-[corrinoid Fe-S protein] + acetyl-CoA + H(+) = methyl-Co(III)-[corrinoid Fe-S protein] + CO + CoA. The protein operates within one-carbon metabolism; methanogenesis from acetate. Its function is as follows. Part of a complex that catalyzes the reversible cleavage of acetyl-CoA, allowing growth on acetate as sole source of carbon and energy. The alpha-epsilon complex generates CO from CO(2), while the beta subunit (this protein) combines the CO with CoA and a methyl group to form acetyl-CoA. The methyl group, which is incorporated into acetyl-CoA, is transferred to the beta subunit by a corrinoid iron-sulfur protein (the gamma-delta complex). In Methanosarcina mazei (strain ATCC BAA-159 / DSM 3647 / Goe1 / Go1 / JCM 11833 / OCM 88) (Methanosarcina frisia), this protein is Acetyl-CoA decarbonylase/synthase complex subunit beta 1 (cdhC1).